The primary structure comprises 496 residues: Apulose kinase (496 aa).

ATP is bound by residues 13–15 (TTN), Thr267, Gly308, and 408–412 (GATQN).

It belongs to the FGGY kinase family.

It catalyses the reaction apulose + ATP = apulose 4-phosphate + ADP + H(+). It participates in carbohydrate metabolism. In terms of biological role, involved in catabolism of D-apiose. Catalyzes phosphorylation of apulose to form apulose 4-phosphate. The polypeptide is Apulose kinase (Pectobacterium atrosepticum (strain SCRI 1043 / ATCC BAA-672) (Erwinia carotovora subsp. atroseptica)).